The sequence spans 1144 residues: ATP-dependent helicase/deoxyribonuclease subunit B (1144 aa).

The UvrD-like helicase ATP-binding domain occupies 1 to 276 (MAIRYVFGRA…IDLDRNERPV (276 aa)). 8–15 (GRAGRGKS) serves as a coordination point for ATP. The 311-residue stretch at 274–584 (RPVLPKVQEI…LVGSIERSKS (311 aa)) folds into the UvrD-like helicase C-terminal domain. Residues C784, C1102, C1105, and C1111 each coordinate [4Fe-4S] cluster.

This sequence belongs to the helicase family. AddB/RexB type 1 subfamily. As to quaternary structure, heterodimer of AddA and AddB. The cofactor is Mg(2+). [4Fe-4S] cluster is required as a cofactor.

The heterodimer acts as both an ATP-dependent DNA helicase and an ATP-dependent, dual-direction single-stranded exonuclease. Recognizes the chi site generating a DNA molecule suitable for the initiation of homologous recombination. The AddB subunit has 5' -&gt; 3' nuclease activity but not helicase activity. The sequence is that of ATP-dependent helicase/deoxyribonuclease subunit B from Alkaliphilus oremlandii (strain OhILAs) (Clostridium oremlandii (strain OhILAs)).